A 527-amino-acid chain; its full sequence is Cytokinin dehydrogenase 6 (527 aa).

The N-terminal stretch at 1–22 (MAARCSIAFMVMASCLSVVVSG) is a signal peptide. The region spanning 55–236 (VAAAPEAVLH…TRARIGLEPA (182 aa)) is the FAD-binding PCMH-type domain. FAD-binding residues include Gly91 and Gly93. A Pros-8alpha-FAD histidine modification is found at His94. Residues Ser95 and Gln99 each coordinate FAD. N-linked (GlcNAc...) asparagine glycosylation is present at Asn121. FAD is bound by residues Asp160, Thr165, Ser171, Ile175, and Ile226. N-linked (GlcNAc...) asparagine glycosylation is found at Asn280 and Asn323. Positions 475, 510, and 513 each coordinate FAD.

It belongs to the oxygen-dependent FAD-linked oxidoreductase family. As to quaternary structure, monomer. It depends on FAD as a cofactor.

The protein localises to the secreted. It is found in the extracellular space. It carries out the reaction N(6)-dimethylallyladenine + A + H2O = 3-methyl-2-butenal + adenine + AH2. Functionally, catalyzes the oxidation of cytokinins, a family of N(6)-substituted adenine derivatives that are plant hormones, where the substituent is an isopentenyl group. The chain is Cytokinin dehydrogenase 6 (CKX6) from Oryza sativa subsp. japonica (Rice).